The sequence spans 139 residues: Large ribosomal subunit protein uL16 (139 aa).

A compositionally biased stretch (basic residues) spans 1–16 (MLIPKRTKYRKQHRPD). Residues 1–23 (MLIPKRTKYRKQHRPDRHGMSKG) form a disordered region.

This sequence belongs to the universal ribosomal protein uL16 family. Part of the 50S ribosomal subunit.

Its function is as follows. Binds 23S rRNA and is also seen to make contacts with the A and possibly P site tRNAs. This Bifidobacterium animalis subsp. lactis (strain AD011) protein is Large ribosomal subunit protein uL16.